Reading from the N-terminus, the 776-residue chain is MQYSVATADGLSGPPSGAYTLPTFKFQPRRESIDWRRISAVDVDRVARELDVATLQENIAGVTFCNLDREVCNHCRQPVDPVLLKVLRLAQLIIEYLLHCQDCLSASVAQLEARLQASLGQQQRGQQELGRQADELKGVREESRRRRKMISTLQQLLLQTGAHSYHTCHLCDKTFMNATFLRGHIQRRHAGMAEVGKQKQEQQLGEVLEELRAKLKWTQGELEAQREAERQRQAQELEMIRQREIEAKKKFDEWKEKERSKLYGEIDKLKQLFWDEFKTVANQNSTLEEKLKVLQSYSMTESHLGSLRDEESEERLKHAQELQALREKMDIQKTEWKRKMKALHEERAAERRQLQEENERLHVTLSQDQKKAAAQSQRHINALRAQLQEQARLIESQEETIQTLSFRRMEEVQEVPKAVVTEEDSSEEELEASLEEQQEQRKVLAALRNNPAWLKQFRPILEDTLEEKLEGMGIKRGTKGISAQTVRRLEPLLRTQREQTARSFREFLSLREKLNQEVSSRAKKRWEGTAVVPQPDGQPPVKSQRTTLATREVRPKTRTLTVALPSKPAEPSTSTPRGHSSHGPGLTQVSTPIPRPRVHGPSSTPVSPGPGLSTPPFSSEEEPEGDVVQRVSLQPPKVLPRSAPQPEDNWGWSDSETSEESAQSPGKGSDGLASSATLVQSMVKNLEKQLETPAKKPSGGVNMFLRPNTALQRSSTPARKTQLSEDESDLEISSLEDLSHDLGPKGKPTPLSHSKLPEKFDASPWSSGSRPRIPGW.

The C2H2-type zinc-finger motif lies at 166 to 189; that stretch reads HTCHLCDKTFMNATFLRGHIQRRH. Positions 196-450 form a coiled coil; that stretch reads GKQKQEQQLG…RKVLAALRNN (255 aa). Ser425 and Ser426 each carry phosphoserine. The segment at 520-776 is disordered; sequence SRAKKRWEGT…SGSRPRIPGW (257 aa). Positions 600–618 are enriched in low complexity; sequence GPSSTPVSPGPGLSTPPFS. A compositionally biased stretch (polar residues) spans 652–683; sequence WSDSETSEESAQSPGKGSDGLASSATLVQSMV. Residues 685-694 show a composition bias toward basic and acidic residues; sequence NLEKQLETPA. Residues 709-721 are compositionally biased toward polar residues; the sequence is TALQRSSTPARKT.

It belongs to the DZIP C2H2-type zinc-finger protein family. As to quaternary structure, interacts with SEPTIN2.

The protein localises to the cytoplasm. It localises to the cytoskeleton. It is found in the cilium basal body. Its subcellular location is the microtubule organizing center. The protein resides in the centrosome. The protein localises to the centriole. Involved in primary cilium formation. Probably acts as a transition zone protein required for localization of PKD1/PC1 and PKD2/PC2 to the ciliary membrane. This chain is Cilium assembly protein DZIP1L, found in Rattus norvegicus (Rat).